The following is a 216-amino-acid chain: GTP cyclohydrolase-2 (216 aa).

51–55 is a GTP binding site; that stretch reads RIHSE. Positions 56, 67, and 69 each coordinate Zn(2+). Residues Q72, 94–96, and T116 contribute to the GTP site; that span reads EGR. The Proton acceptor role is filled by D128. R130 acts as the Nucleophile in catalysis. Residues T151 and K156 each coordinate GTP.

It belongs to the GTP cyclohydrolase II family. Zn(2+) is required as a cofactor.

It carries out the reaction GTP + 4 H2O = 2,5-diamino-6-hydroxy-4-(5-phosphoribosylamino)-pyrimidine + formate + 2 phosphate + 3 H(+). It participates in cofactor biosynthesis; riboflavin biosynthesis; 5-amino-6-(D-ribitylamino)uracil from GTP: step 1/4. Functionally, catalyzes the conversion of GTP to 2,5-diamino-6-ribosylamino-4(3H)-pyrimidinone 5'-phosphate (DARP), formate and pyrophosphate. In Haemophilus influenzae (strain PittEE), this protein is GTP cyclohydrolase-2.